A 105-amino-acid chain; its full sequence is Heat shock protein HspQ (105 aa).

It belongs to the HspQ family.

Its subcellular location is the cytoplasm. In terms of biological role, involved in the degradation of certain denaturated proteins, including DnaA, during heat shock stress. The protein is Heat shock protein HspQ of Yersinia enterocolitica serotype O:8 / biotype 1B (strain NCTC 13174 / 8081).